Reading from the N-terminus, the 320-residue chain is Cytochrome f (320 aa).

Residues 1-35 form the signal peptide; the sequence is MQTRNAFSWIKKEITRSISVLLMIYIITRAPISNA. Heme contacts are provided by Y36, C56, C59, and H60. Residues 286 to 305 traverse the membrane as a helical segment; it reads VQGLLLFLASIILAQIFLVL.

Belongs to the cytochrome f family. In terms of assembly, the 4 large subunits of the cytochrome b6-f complex are cytochrome b6, subunit IV (17 kDa polypeptide, petD), cytochrome f and the Rieske protein, while the 4 small subunits are PetG, PetL, PetM and PetN. The complex functions as a dimer. Requires heme as cofactor.

It localises to the plastid. The protein resides in the chloroplast thylakoid membrane. In terms of biological role, component of the cytochrome b6-f complex, which mediates electron transfer between photosystem II (PSII) and photosystem I (PSI), cyclic electron flow around PSI, and state transitions. The sequence is that of Cytochrome f (petA) from Vicia faba (Broad bean).